A 490-amino-acid chain; its full sequence is Betaine aldehyde dehydrogenase (490 aa).

3 residues coordinate K(+): threonine 26, isoleucine 27, and aspartate 93. 150 to 152 contributes to the NAD(+) binding site; the sequence is GAW. The active-site Charge relay system is lysine 162. Residue 176–179 participates in NAD(+) binding; it reads KPSE. Valine 180 is a binding site for K(+). 230–233 serves as a coordination point for NAD(+); the sequence is GVAS. Leucine 246 is a binding site for K(+). Glutamate 252 acts as the Proton acceptor in catalysis. Residues glycine 254, cysteine 286, and glutamate 387 each contribute to the NAD(+) site. The active-site Nucleophile is the cysteine 286. Cysteine 286 carries the post-translational modification Cysteine sulfenic acid (-SOH). K(+) contacts are provided by lysine 457 and glycine 460. Glutamate 464 (charge relay system) is an active-site residue.

It belongs to the aldehyde dehydrogenase family. As to quaternary structure, dimer of dimers. Requires K(+) as cofactor.

The catalysed reaction is betaine aldehyde + NAD(+) + H2O = glycine betaine + NADH + 2 H(+). Its pathway is amine and polyamine biosynthesis; betaine biosynthesis via choline pathway; betaine from betaine aldehyde: step 1/1. Its function is as follows. Involved in the biosynthesis of the osmoprotectant glycine betaine. Catalyzes the irreversible oxidation of betaine aldehyde to the corresponding acid. The protein is Betaine aldehyde dehydrogenase of Escherichia coli (strain 55989 / EAEC).